Here is a 143-residue protein sequence, read N- to C-terminus: Nucleoside diphosphate kinase (143 aa).

Residues K11, F59, R87, T93, R104, and N114 each coordinate ATP. The Pros-phosphohistidine intermediate role is filled by H117.

Belongs to the NDK family. As to quaternary structure, homotetramer. Requires Mg(2+) as cofactor.

The protein localises to the cytoplasm. It carries out the reaction a 2'-deoxyribonucleoside 5'-diphosphate + ATP = a 2'-deoxyribonucleoside 5'-triphosphate + ADP. The catalysed reaction is a ribonucleoside 5'-diphosphate + ATP = a ribonucleoside 5'-triphosphate + ADP. In terms of biological role, major role in the synthesis of nucleoside triphosphates other than ATP. The ATP gamma phosphate is transferred to the NDP beta phosphate via a ping-pong mechanism, using a phosphorylated active-site intermediate. This Alcanivorax borkumensis (strain ATCC 700651 / DSM 11573 / NCIMB 13689 / SK2) protein is Nucleoside diphosphate kinase.